Here is a 331-residue protein sequence, read N- to C-terminus: DSC E3 ubiquitin ligase complex subunit D (331 aa).

An N-linked (GlcNAc...) asparagine glycan is attached at Asn-26. The next 3 helical transmembrane spans lie at 63-83 (ILIYCELSALYYMDCSVILFA), 107-127 (PFIGAIFVSNIFCMIFHNFFT), and 159-179 (LFLLDFLVLILDLVMLGLIVE). Over residues 197–214 (VQDHDSEERGVHRTRPES) the composition is skewed to basic and acidic residues. Positions 197–225 (VQDHDSEERGVHRTRPESRSSVVGAELDE) are disordered.

In terms of assembly, component of the DSC E3 ubiquitin ligase complex composed of dscA, dscB, dscC and dscD.

Its subcellular location is the endoplasmic reticulum membrane. The protein operates within protein modification; protein ubiquitination. Functionally, component of the DSC E3 ubiquitin ligase complex which is required for the srbA transcriptional activator proteolytic cleavage to release the soluble transcription factor from the membrane in low oxygen or sterol conditions. Required for growth during hypoxia and triazole drug susceptibility, as well as for virulence in a murine model of invasive pulmonary aspergillosis (IPA). The polypeptide is DSC E3 ubiquitin ligase complex subunit D (Aspergillus fumigatus (strain CBS 144.89 / FGSC A1163 / CEA10) (Neosartorya fumigata)).